Here is a 431-residue protein sequence, read N- to C-terminus: Phosphomethylpyrimidine synthase (431 aa).

Residues Asn66, Met95, Tyr124, His163, 185-187, 226-229, and Glu265 contribute to the substrate site; these read SRG and DGLR. His269 is a Zn(2+) binding site. A substrate-binding site is contributed by Tyr292. His333 is a Zn(2+) binding site. The [4Fe-4S] cluster site is built by Cys408, Cys411, and Cys415.

The protein belongs to the ThiC family. Requires [4Fe-4S] cluster as cofactor.

It carries out the reaction 5-amino-1-(5-phospho-beta-D-ribosyl)imidazole + S-adenosyl-L-methionine = 4-amino-2-methyl-5-(phosphooxymethyl)pyrimidine + CO + 5'-deoxyadenosine + formate + L-methionine + 3 H(+). Its pathway is cofactor biosynthesis; thiamine diphosphate biosynthesis. Functionally, catalyzes the synthesis of the hydroxymethylpyrimidine phosphate (HMP-P) moiety of thiamine from aminoimidazole ribotide (AIR) in a radical S-adenosyl-L-methionine (SAM)-dependent reaction. The protein is Phosphomethylpyrimidine synthase of Dehalococcoides mccartyi (strain ATCC BAA-2100 / JCM 16839 / KCTC 5957 / BAV1).